The primary structure comprises 211 residues: Beta-crystallin B3 (211 aa).

Positions 1–21 (MTEQQSPPEQMVTGEGAGERG) are disordered. The N-terminal arm stretch occupies residues 1–23 (MTEQQSPPEQMVTGEGAGERGGN). Beta/gamma crystallin 'Greek key' domains follow at residues 24–63 (YKIT…QVES) and 64–108 (GPWL…RPLQ). Residues 109–113 (IDSPD) are connecting peptide. Beta/gamma crystallin 'Greek key' domains follow at residues 114–155 (HKIH…RALN) and 156–198 (GTWV…RRVR). The tract at residues 200 to 211 (QQWHQRGSFENS) is C-terminal arm.

This sequence belongs to the beta/gamma-crystallin family. Homo/heterodimer, or complexes of higher-order. The structure of beta-crystallin oligomers seems to be stabilized through interactions between the N-terminal arms.

Functionally, crystallins are the dominant structural components of the vertebrate eye lens. This Gallus gallus (Chicken) protein is Beta-crystallin B3 (CRYBB3).